A 208-amino-acid chain; its full sequence is Large ribosomal subunit protein uL4 (208 aa).

Residues 47–58 show a composition bias toward basic and acidic residues; sequence ARAARERSDVAR. Positions 47–84 are disordered; sequence ARAARERSDVARTGKKFGRQKGGGTARHGDRRAPIFIG.

This sequence belongs to the universal ribosomal protein uL4 family. Part of the 50S ribosomal subunit.

In terms of biological role, one of the primary rRNA binding proteins, this protein initially binds near the 5'-end of the 23S rRNA. It is important during the early stages of 50S assembly. It makes multiple contacts with different domains of the 23S rRNA in the assembled 50S subunit and ribosome. Forms part of the polypeptide exit tunnel. This is Large ribosomal subunit protein uL4 from Sphingopyxis alaskensis (strain DSM 13593 / LMG 18877 / RB2256) (Sphingomonas alaskensis).